Consider the following 526-residue polypeptide: Peptide chain release factor 3 (526 aa).

In terms of domain architecture, tr-type G spans 9–277; sequence DKRRTFAIIS…GIVEWAPKPL (269 aa). GTP contacts are provided by residues 18–25, 86–90, and 140–143; these read SHPDAGKT, DTPGH, and NKLD.

Belongs to the TRAFAC class translation factor GTPase superfamily. Classic translation factor GTPase family. PrfC subfamily.

The protein resides in the cytoplasm. Functionally, increases the formation of ribosomal termination complexes and stimulates activities of RF-1 and RF-2. It binds guanine nucleotides and has strong preference for UGA stop codons. It may interact directly with the ribosome. The stimulation of RF-1 and RF-2 is significantly reduced by GTP and GDP, but not by GMP. In Shewanella sp. (strain MR-4), this protein is Peptide chain release factor 3.